Here is a 196-residue protein sequence, read N- to C-terminus: uncharacterized protein (196 aa).

Positions 21–35 are enriched in basic and acidic residues; that stretch reads ESRRKDGSVRRERAV. 2 disordered regions span residues 21–53 and 65–196; these read ESRRKDGSVRRERAVKPGYTAPEDIKRYRPGRG and LQLS…KEKE. Residues 66-75 show a composition bias toward polar residues; that stretch reads QLSNDASTSK. Composition is skewed to basic and acidic residues over residues 84–94, 100–143, and 173–196; these read ELEKEKLERPL, EKND…KDFK, and KMSKRENKKSINTVDKKTGYKEKE.

This is an uncharacterized protein from Schizosaccharomyces pombe (strain 972 / ATCC 24843) (Fission yeast).